A 181-amino-acid chain; its full sequence is CDP-archaeol synthase (181 aa).

The next 5 helical transmembrane spans lie at 7–27 (VVVAVWAMLPAYVPNNAAVLA), 55–75 (AVGTAAGVALAVALNALRPAA), 80–100 (GVVLPAFPPAAMGTLAFGAMV), 128–148 (FVVVALALTALAVPAWVGDTF), and 150–170 (LPVLVTVAVLTPALHLLTNGI).

Belongs to the CDP-archaeol synthase family. Mg(2+) is required as a cofactor.

It is found in the cell membrane. It catalyses the reaction 2,3-bis-O-(geranylgeranyl)-sn-glycerol 1-phosphate + CTP + H(+) = CDP-2,3-bis-O-(geranylgeranyl)-sn-glycerol + diphosphate. Its pathway is membrane lipid metabolism; glycerophospholipid metabolism. Functionally, catalyzes the formation of CDP-2,3-bis-(O-geranylgeranyl)-sn-glycerol (CDP-archaeol) from 2,3-bis-(O-geranylgeranyl)-sn-glycerol 1-phosphate (DGGGP) and CTP. This reaction is the third ether-bond-formation step in the biosynthesis of archaeal membrane lipids. This is CDP-archaeol synthase from Halobacterium salinarum (strain ATCC 29341 / DSM 671 / R1).